The chain runs to 314 residues: DDRGK domain-containing protein 1 (314 aa).

Residues 1–28 (MVAPVWYLVAAALLVGFILFLTRSRGRA) traverse the membrane as a helical segment. The mediates interaction with CDK5RAP3 stretch occupies residues 1-114 (MVAPVWYLVA…VEKPAETHLS (114 aa)). The Cytoplasmic segment spans residues 29-314 (ASAGQEPLHN…GRESPAQAPA (286 aa)). Disordered stretches follow at residues 31 to 75 (AGQE…SRLQ) and 100 to 186 (QEEE…QREH). S72 and S114 each carry phosphoserine. Residues 118–216 (GAKKLRKLEE…MTEEQSQSFL (99 aa)) are mediates interaction with TRIP4. Positions 124-186 (KLEEKQARKA…AREEQAQREH (63 aa)) are enriched in basic and acidic residues. The UFM1-interacting motif (UFIM) signature appears at 195-209 (AFVVEEEGVGETMTE). The tract at residues 216–314 (LTEFINYIKQ…GRESPAQAPA (99 aa)) is mediates interaction with UFL1. One can recognise a PCI domain in the interval 229–273 (VLLEDLASQVGLRTQDTINRIQDLLAEGTITGVIDDRGKFIYITP). K267 participates in a covalent cross-link: Glycyl lysine isopeptide (Lys-Gly) (interchain with G-Cter in UFM1).

This sequence belongs to the DDRGK1 family. In terms of assembly, component of the UFM1 ribosome E3 ligase (UREL) complex, composed of UFL1, DDRGK1 and CDK5RAP3. Interacts with (unphosphorylated) ERN1/IRE1-alpha; interaction is dependent on UFM1 and takes place in response to endoplasmic reticulum stress, regulating ERN1/IRE1-alpha stability. Interacts with NFKBIA. Interacts with SOX9. Ubiquitinated. Ubiquitination probably triggers proteasomal degradation and is negatively regulated by UFL1, the enzyme involved in the ufmylation of DDRGK1. Post-translationally, ufmylated; conjugated to ubiquitin-like protein UFM1, probably at Lys-267 by UFL1. The relevance of ufmylation is however unclear: as DDRGK1 acts as a substrate adapters for ufmylation, it is uncertain whether ufmylation is a collateral effect of ufmylation process or is required to regulate its activity. Widely expressed (at protein level). In the brain, highest levels in medulla oblongata, followed by cerebral cortex, cerebellum and frontal lobe.

It localises to the endoplasmic reticulum membrane. Its function is as follows. Component of the UFM1 ribosome E3 ligase (UREL) complex, a multiprotein complex that catalyzes ufmylation of endoplasmic reticulum-docked proteins. The UREL complex plays a key role in ribosome recycling by mediating mono-ufmylation of the RPL26/uL24 subunit of the 60S ribosome following ribosome dissociation: ufmylation weakens the junction between post-termination 60S subunits and SEC61 translocons, promoting release and recycling of the large ribosomal subunit from the endoplasmic reticulum membrane. Ufmylation of RPL26/uL24 and subsequent 60S ribosome recycling either take place after normal termination of translation or after ribosome stalling during cotranslational translocation at the endoplasmic reticulum. Within the UREL complex, DDRGK1 tethers the complex to the endoplasmic reticulum membrane to restrict its activity to endoplasmic reticulum-docked ribosomes and acts as an ufmylation 'reader': following RPL26/uL24 ufmylation, DDRGK1 specifically binds to ufmylated RPL26/uL24 via its UFIM motif, resulting in stable association between the 60S ribosome and the UREL complex, followed by dissociation of the 60S ribosome subunit from the endoplasmic reticulum membrane. The UREL complex is also involved in reticulophagy in response to endoplasmic reticulum stress by promoting ufmylation of proteins such as CYB5R3 and RPN1, thereby promoting lysosomal degradation of ufmylated proteins. Ufmylation-dependent reticulophagy inhibits the unfolded protein response (UPR) by regulating ERN1/IRE1-alpha stability. Acts as a regulator of immunity by promoting differentiation of B-cells into plasma cells: acts by promoting expansion of the endoplasmic reticulum and regulating the unfolded protein response (UPR). May also be required for TRIP4 ufmylation. May play a role in NF-kappa-B-mediated transcription through regulation of the phosphorylation and the degradation of NFKBIA, the inhibitor of NF-kappa-B. Plays a role in cartilage development through SOX9, inhibiting the ubiquitin-mediated proteasomal degradation of this transcriptional regulator. Required for stabilization and ufmylation of ATG9A. The protein is DDRGK domain-containing protein 1 of Homo sapiens (Human).